A 156-amino-acid polypeptide reads, in one-letter code: MPRRREVPKRDILPDPKFGNVEVAKFMNVLMLDGKKSVAERIVYGAFDQIEKKAGKAPIEVFSVAINNVKPVVEVKSRRVGGANYQVPVEVRPSRRLALAMRWLREAAKKRSEKSMALRLAGELLEAAEGRGGAMKKRDEVHRMAEANKAFSHFRF.

Belongs to the universal ribosomal protein uS7 family. In terms of assembly, part of the 30S ribosomal subunit. Contacts proteins S9 and S11.

In terms of biological role, one of the primary rRNA binding proteins, it binds directly to 16S rRNA where it nucleates assembly of the head domain of the 30S subunit. Is located at the subunit interface close to the decoding center, probably blocks exit of the E-site tRNA. This Cupriavidus metallidurans (strain ATCC 43123 / DSM 2839 / NBRC 102507 / CH34) (Ralstonia metallidurans) protein is Small ribosomal subunit protein uS7.